An 800-amino-acid polypeptide reads, in one-letter code: Putative antiporter subunit mnhA2 (800 aa).

20 helical membrane-spanning segments follow: residues 1–21, 33–53, 78–98, 118–138, 167–187, 207–227, 241–261, 273–293, 300–320, 331–351, 387–407, 424–444, 472–492, 527–547, 595–615, 627–647, 651–671, 676–696, 712–732, and 768–788; these read MSLVYLLIAILVIMAMILLTS, IALTAPVIASIYFLLQVPSVI, GLSLMFSLIISLIGIAVFFYA, LFMFSMLGIVLADNTILMYVF, FMITVFGGLALLVGFIMLYIM, ALFIPMIIMFLLGAFTKSAQF, TPVSAYLHSATMVKAGIFLLL, YIYIVTFVGLITMLFGSITAL, GILAYSTISQLGMIMAMVGIG, IASIYVFVLFAALFHLMNHAI, LVMMIAALSMAGVPFLNGFLS, FSLISMIIIVCMGVIASIFTF, PWLFSLPSLILMVLVPVIFFV, GFNIPLLLTIIIILLGSVLAI, IIMTLGIFMVIIGYGYIRIGL, GPLEVILAIVTVIIGLSLIFI, LTMVILNGVIGFVVTLFFIAM, LALTQLVVETITTILFIVSFS, IIKISVSLMMALIVVSLIFIA, and LDTLFEGLVLIITGLGIYTLL.

Belongs to the CPA3 antiporters (TC 2.A.63) subunit A family. May form a heterooligomeric complex that consists of seven subunits: mnhA2, mnhB2, mnhC2, mnhD2, mnhE2, mnhF2 and mnhG2.

Its subcellular location is the cell membrane. The protein is Putative antiporter subunit mnhA2 (mnhA2) of Staphylococcus aureus (strain MRSA252).